A 301-amino-acid chain; its full sequence is Putative dynamin-related protein 4A (301 aa).

The Dynamin-type G domain maps to 59-301 (GIQLPTIVVV…LIDGDIVGIL (243 aa)). A G1 motif region spans residues 69-76 (GDQSSGKS). Residue 69–76 (GDQSSGKS) coordinates GTP. A G2 motif region spans residues 94-96 (CTR). The interval 168–171 (DLPG) is G3 motif. Residues 168–172 (DLPGI) and 237–240 (TKAD) contribute to the GTP site. Positions 237–240 (TKAD) are G4 motif. Residue glutamate 270 is a region of interest, G5 motif.

It belongs to the TRAFAC class dynamin-like GTPase superfamily. Dynamin/Fzo/YdjA family.

The protein is Putative dynamin-related protein 4A (DRP4A) of Arabidopsis thaliana (Mouse-ear cress).